Reading from the N-terminus, the 364-residue chain is Putative agmatine deiminase (364 aa).

The active-site Amidino-cysteine intermediate is the cysteine 355.

The protein belongs to the agmatine deiminase family.

It catalyses the reaction agmatine + H2O = N-carbamoylputrescine + NH4(+). This chain is Putative agmatine deiminase, found in Mycoplasma mycoides subsp. mycoides SC (strain CCUG 32753 / NCTC 10114 / PG1).